A 171-amino-acid chain; its full sequence is O-acetyl-ADP-ribose deacetylase 1 (171 aa).

The region spanning 1–171 (MKKITVIQGD…NYDLYLKLLN (171 aa)) is the Macro domain. Residues 10–11 (DI), Asn24, 32–34 (GVD), and 121–125 (STGIY) each bind substrate. Asp34 serves as the catalytic Proton acceptor.

The protein belongs to the MacroD-type family. YmdB subfamily. As to quaternary structure, homodimer. Interacts with RNase III.

The enzyme catalyses 3''-O-acetyl-ADP-D-ribose + H2O = ADP-D-ribose + acetate + H(+). It catalyses the reaction 2''-O-acetyl-ADP-D-ribose + H2O = ADP-D-ribose + acetate + H(+). Functionally, deacetylates O-acetyl-ADP ribose to yield ADP-ribose and free acetate. Down-regulates ribonuclease 3 (RNase III) activity. Acts by interacting directly with the region of the ribonuclease that is required for dimerization/activation. The protein is O-acetyl-ADP-ribose deacetylase 1 of Pantoea vagans (strain C9-1) (Pantoea agglomerans (strain C9-1)).